A 61-amino-acid polypeptide reads, in one-letter code: uncharacterized protein (61 aa).

An N-terminal signal peptide occupies residues 1–30 (MDVEVANMAAKLRVRGLKLPNAIVVSTAIL).

This is an uncharacterized protein from Archaeoglobus fulgidus (strain ATCC 49558 / DSM 4304 / JCM 9628 / NBRC 100126 / VC-16).